The sequence spans 320 residues: Nodulation efficiency protein NfeD (320 aa).

Belongs to the ornithine cyclodeaminase/mu-crystallin family.

Seems to be involved in the nodulation efficiency of R.meliloti GR4 on alfalfa roots. The protein is Nodulation efficiency protein NfeD of Rhizobium meliloti (Ensifer meliloti).